The sequence spans 142 residues: Alpha-lactalbumin (142 aa).

The signal sequence occupies residues 1–19; that stretch reads MMSFVSLLLVGILFHATQA. Residues 20 to 142 form the C-type lysozyme domain; it reads EQLTKCEVFQ…KLDQWLCEKL (123 aa). Cystine bridges form between cysteine 25–cysteine 139, cysteine 47–cysteine 130, cysteine 80–cysteine 96, and cysteine 92–cysteine 110. N-linked (GlcNAc...) asparagine glycans are attached at residues asparagine 64 and asparagine 93. Ca(2+) contacts are provided by lysine 98, aspartate 101, aspartate 103, aspartate 106, and aspartate 107.

Belongs to the glycosyl hydrolase 22 family. As to quaternary structure, lactose synthase (LS) is a heterodimer of a catalytic component, beta1,4-galactosyltransferase (beta4Gal-T1) and a regulatory component, alpha-lactalbumin (LA). As to expression, mammary gland specific. Secreted in milk.

Its subcellular location is the secreted. Functionally, regulatory subunit of lactose synthase, changes the substrate specificity of galactosyltransferase in the mammary gland making glucose a good acceptor substrate for this enzyme. This enables LS to synthesize lactose, the major carbohydrate component of milk. In other tissues, galactosyltransferase transfers galactose onto the N-acetylglucosamine of the oligosaccharide chains in glycoproteins. The chain is Alpha-lactalbumin (LALBA) from Capra hircus (Goat).